Reading from the N-terminus, the 383-residue chain is Succinyl-diaminopimelate desuccinylase (383 aa).

Residue His79 coordinates Zn(2+). The active site involves Asp81. Position 110 (Asp110) interacts with Zn(2+). Glu141 acts as the Proton acceptor in catalysis. Zn(2+)-binding residues include Glu142, Glu170, and His355.

This sequence belongs to the peptidase M20A family. DapE subfamily. Homodimer. The cofactor is Zn(2+). It depends on Co(2+) as a cofactor.

The catalysed reaction is N-succinyl-(2S,6S)-2,6-diaminopimelate + H2O = (2S,6S)-2,6-diaminopimelate + succinate. The protein operates within amino-acid biosynthesis; L-lysine biosynthesis via DAP pathway; LL-2,6-diaminopimelate from (S)-tetrahydrodipicolinate (succinylase route): step 3/3. Its function is as follows. Catalyzes the hydrolysis of N-succinyl-L,L-diaminopimelic acid (SDAP), forming succinate and LL-2,6-diaminopimelate (DAP), an intermediate involved in the bacterial biosynthesis of lysine and meso-diaminopimelic acid, an essential component of bacterial cell walls. The chain is Succinyl-diaminopimelate desuccinylase from Helicobacter pylori (strain HPAG1).